The primary structure comprises 175 residues: Diacylglycerol kinase (175 aa).

A run of 2 helical transmembrane segments spans residues 55–75 and 96–116; these read VAPN…YAFA and LLHL…LVMI. The active-site Proton acceptor is glutamate 118. Glutamate 125 provides a ligand contact to a divalent metal cation. A helical transmembrane segment spans residues 151–171; that stretch reads VLLAAIAAVIVGGCLLLPPLL.

It belongs to the bacterial diacylglycerol kinase family. The cofactor is Mg(2+).

The protein localises to the cell membrane. It catalyses the reaction a 1,2-diacyl-sn-glycerol + ATP = a 1,2-diacyl-sn-glycero-3-phosphate + ADP + H(+). Its function is as follows. Catalyzes the ATP-dependent phosphorylation of sn-l,2-diacylglycerol (DAG) to phosphatidic acid. The protein is Diacylglycerol kinase (dgkA) of Synechocystis sp. (strain ATCC 27184 / PCC 6803 / Kazusa).